A 536-amino-acid chain; its full sequence is Phosphoenolpyruvate carboxykinase (ATP) (536 aa).

Residues Arg-62, Tyr-203, and Lys-209 each coordinate substrate. ATP-binding positions include Lys-209, His-228, and 244-252 (GLSGTGKTT). The Mn(2+) site is built by Lys-209 and His-228. Residue Asp-265 participates in Mn(2+) binding. ATP contacts are provided by residues Glu-293, Arg-329, 445-446 (RI), and Thr-451. Arg-329 contacts substrate.

The protein belongs to the phosphoenolpyruvate carboxykinase (ATP) family. In terms of assembly, monomer. Requires Mn(2+) as cofactor.

The protein resides in the cytoplasm. The catalysed reaction is oxaloacetate + ATP = phosphoenolpyruvate + ADP + CO2. Its pathway is carbohydrate biosynthesis; gluconeogenesis. Its function is as follows. Involved in the gluconeogenesis. Catalyzes the conversion of oxaloacetate (OAA) to phosphoenolpyruvate (PEP) through direct phosphoryl transfer between the nucleoside triphosphate and OAA. The protein is Phosphoenolpyruvate carboxykinase (ATP) of Glaesserella parasuis serovar 5 (strain SH0165) (Haemophilus parasuis).